The following is a 469-amino-acid chain: MKPVIALIGRPNVGKSTLFNQITKSRDALVADFAGLTRDRKYGDATYQNKSFIVVDTGGIGESEGGIDNYMAEQSKTAINEADIIIFVVDARAGLLASDEQIARELRTLGKKIYLVANKVDGVHAEAALVEFYKLGLGEPLQVAASHGRGVQQMLEDVLQDIPEDENPEEHDKDTGLRLAIIGRPNVGKSTLVNRLLGEDRVVAFDQPGTTRDSIYIPFEREGRKYTLIDTAGVRRKGKVDEMIEKFSIVKTLQAMKDAHVVVVVVDAREGIVEQDLHLIGYALEAGRAMVIAINKWDNMSEYDRKQCKLDVERRFDFIPWARIHLISALHGTGVGELYPSIHRAYESANLKVSPAKLTQILNDATDQHQPPTVQGRRIKMRYAHMGGQNPPTIVIHGNKVDKTPADYRRYLENVFRKVYKLEGTPVKIEFKTSENPFEGRKSQVDERTAARRRRYIQKFKKAEKKFKR.

EngA-type G domains follow at residues 3–166 (PVIA…PEDE) and 177–350 (LRLA…ESAN). GTP is bound by residues 9–16 (GRPNVGKS), 56–60 (DTGGI), 118–121 (NKVD), 183–190 (GRPNVGKS), 230–234 (DTAGV), and 295–298 (NKWD). The 85-residue stretch at 351–435 (LKVSPAKLTQ…PVKIEFKTSE (85 aa)) folds into the KH-like domain.

Belongs to the TRAFAC class TrmE-Era-EngA-EngB-Septin-like GTPase superfamily. EngA (Der) GTPase family. As to quaternary structure, associates with the 50S ribosomal subunit.

GTPase that plays an essential role in the late steps of ribosome biogenesis. The sequence is that of GTPase Der from Acinetobacter baumannii (strain SDF).